The sequence spans 187 residues: Adenylate kinase (187 aa).

Residue 11 to 16 (GAGKGT) participates in ATP binding. Residues 31–60 (STGDILREAVKNQTPMGIEAKRYMDAGDLV) form an NMP region. Residues Thr32, Arg37, 58 to 60 (DLV), 86 to 89 (GFPR), and Gln93 each bind AMP. The tract at residues 127–137 (GRAEIEGRADD) is LID. Arg128 is an ATP binding site. Residues Arg134 and Arg145 each contribute to the AMP site. Gly173 provides a ligand contact to ATP.

The protein belongs to the adenylate kinase family. As to quaternary structure, monomer.

The protein localises to the cytoplasm. The enzyme catalyses AMP + ATP = 2 ADP. Its pathway is purine metabolism; AMP biosynthesis via salvage pathway; AMP from ADP: step 1/1. Functionally, catalyzes the reversible transfer of the terminal phosphate group between ATP and AMP. Plays an important role in cellular energy homeostasis and in adenine nucleotide metabolism. In Leptospira borgpetersenii serovar Hardjo-bovis (strain JB197), this protein is Adenylate kinase.